Here is a 351-residue protein sequence, read N- to C-terminus: Glycerol-3-phosphate dehydrogenase [NAD(P)+] (351 aa).

Ser-18, Trp-19, Arg-38, and Lys-122 together coordinate NADPH. Sn-glycerol 3-phosphate-binding residues include Lys-122, Gly-153, and Ser-155. Ala-157 contributes to the NADPH binding site. Positions 208, 261, 271, 272, and 273 each coordinate sn-glycerol 3-phosphate. Residue Lys-208 is the Proton acceptor of the active site. Arg-272 contributes to the NADPH binding site. Glu-297 serves as a coordination point for NADPH.

It belongs to the NAD-dependent glycerol-3-phosphate dehydrogenase family.

It localises to the cytoplasm. It carries out the reaction sn-glycerol 3-phosphate + NAD(+) = dihydroxyacetone phosphate + NADH + H(+). The enzyme catalyses sn-glycerol 3-phosphate + NADP(+) = dihydroxyacetone phosphate + NADPH + H(+). It participates in membrane lipid metabolism; glycerophospholipid metabolism. In terms of biological role, catalyzes the reduction of the glycolytic intermediate dihydroxyacetone phosphate (DHAP) to sn-glycerol 3-phosphate (G3P), the key precursor for phospholipid synthesis. The chain is Glycerol-3-phosphate dehydrogenase [NAD(P)+] from Bordetella parapertussis (strain 12822 / ATCC BAA-587 / NCTC 13253).